The primary structure comprises 83 residues: U25-theraphotoxin-Cg1a (83 aa).

A signal peptide spans Met1–Ala23. Residues Gln24–Arg48 constitute a propeptide that is removed on maturation. 3 disulfide bridges follow: Cys50/Cys66, Cys57/Cys71, and Cys65/Cys81.

This sequence belongs to the neurotoxin 07 (Beta/delta-agtx) family. 03 (aga-4) subfamily. JZTX sub-subfamily. In terms of tissue distribution, expressed by the venom gland.

It localises to the secreted. Inhibits TTX-sensitive sodium currents in rat dorsal root ganglion (DRG) neurons. The polypeptide is U25-theraphotoxin-Cg1a (Chilobrachys guangxiensis (Chinese earth tiger tarantula)).